A 470-amino-acid chain; its full sequence is 6-phospho-beta-galactosidase 1 (470 aa).

D-galactose 6-phosphate contacts are provided by Gln-23, His-120, Asn-163, Glu-164, and Asn-300. The active-site Proton donor is the Glu-164. Catalysis depends on Glu-378, which acts as the Nucleophile. Residues Ser-434, Trp-435, Lys-441, and Tyr-443 each contribute to the D-galactose 6-phosphate site.

Belongs to the glycosyl hydrolase 1 family.

The catalysed reaction is a 6-phospho-beta-D-galactoside + H2O = D-galactose 6-phosphate + an alcohol. It functions in the pathway carbohydrate metabolism; lactose degradation; D-galactose 6-phosphate and beta-D-glucose from lactose 6-phosphate: step 1/1. The polypeptide is 6-phospho-beta-galactosidase 1 (Streptococcus pneumoniae (strain ATCC BAA-255 / R6)).